Here is a 409-residue protein sequence, read N- to C-terminus: Putative competence-damage inducible protein (409 aa).

This sequence belongs to the CinA family.

This is Putative competence-damage inducible protein from Clostridium botulinum (strain Loch Maree / Type A3).